The primary structure comprises 810 residues: Glycerol-3-phosphate acyltransferase (810 aa).

Residues 305-310 carry the HXXXXD motif motif; sequence CHRSHI.

It belongs to the GPAT/DAPAT family.

The protein localises to the cell inner membrane. The enzyme catalyses sn-glycerol 3-phosphate + an acyl-CoA = a 1-acyl-sn-glycero-3-phosphate + CoA. It functions in the pathway phospholipid metabolism; CDP-diacylglycerol biosynthesis; CDP-diacylglycerol from sn-glycerol 3-phosphate: step 1/3. The protein is Glycerol-3-phosphate acyltransferase of Haemophilus influenzae (strain PittEE).